A 445-amino-acid chain; its full sequence is Anthranilate N-benzoyltransferase protein 1 (445 aa).

Residues His-164 and Asp-392 each act as proton acceptor in the active site.

Belongs to the plant acyltransferase family. N-terminus is blocked.

It catalyses the reaction anthranilate + benzoyl-CoA = N-benzoylanthranilate + CoA. It functions in the pathway phytoalexin biosynthesis; methoxydianthramide B biosynthesis. Its function is as follows. Catalyzes the formation of N-benzoylanthranilate, in the course of methoxydianthramide B, a phytoalexin. Phytoalexins are produced in response to infection by parasites, and are essential for the expression of disease resistance. The sequence is that of Anthranilate N-benzoyltransferase protein 1 (HCBT1) from Dianthus caryophyllus (Carnation).